The primary structure comprises 127 residues: Small ribosomal subunit protein eS8 (127 aa).

This sequence belongs to the eukaryotic ribosomal protein eS8 family. Part of the 30S ribosomal subunit.

The polypeptide is Small ribosomal subunit protein eS8 (rps8e) (Pyrococcus horikoshii (strain ATCC 700860 / DSM 12428 / JCM 9974 / NBRC 100139 / OT-3)).